The following is a 243-amino-acid chain: uncharacterized protein (243 aa).

The signal sequence occupies residues Met-1–Ala-19. 2 N-linked (GlcNAc...) asparagine glycosylation sites follow: Asn-112 and Asn-206.

This is an uncharacterized protein from Encephalitozoon cuniculi (strain GB-M1) (Microsporidian parasite).